The sequence spans 603 residues: Serine/threonine-protein kinase PLK1 (603 aa).

The segment covering M1–A15 has biased composition (low complexity). Positions M1 to G32 are disordered. K19 is covalently cross-linked (Glycyl lysine isopeptide (Lys-Gly) (interchain with G-Cter in ubiquitin)). A Protein kinase domain is found at Y53 to F305. ATP-binding positions include L59 to C67 and K82. S103 carries the phosphoserine modification. An ATP-binding site is contributed by E131. S137 carries the phosphoserine modification. Residue D176 is the Proton acceptor of the active site. Residues K178–N181 and D194 contribute to the ATP site. An activation loop region spans residues D194–E221. At T210 the chain carries Phosphothreonine; by AURKA. At T214 the chain carries Phosphothreonine. Residues S269 and S335 each carry the phosphoserine; by autocatalysis modification. The D-box that targets the protein for proteasomal degradation in anaphase signature appears at R337–L340. K338 participates in a covalent cross-link: Glycyl lysine isopeptide (Lys-Gly) (interchain with G-Cter in SUMO2). The disordered stretch occupies residues K338 to P361. Over residues L351–P361 the composition is skewed to basic and acidic residues. 2 positions are modified to phosphoserine: S375 and S450. The POLO box 1 domain occupies W410 to E488. A Glycyl lysine isopeptide (Lys-Gly) (interchain with G-Cter in ubiquitin) cross-link involves residue K492. Residues A493–R507 are linker. T498 bears the Phosphothreonine mark. The POLO box 2 domain occupies Y510 to S592. An important for interaction with phosphorylated proteins region spans residues H538–K540.

Belongs to the protein kinase superfamily. Ser/Thr protein kinase family. CDC5/Polo subfamily. As to quaternary structure, interacts with CEP170 and EVI5. Interacts and phosphorylates ERCC6L. Interacts with FAM29A. Interacts with SLX4/BTBD12 and TTDN1. Interacts with BUB1B. Interacts (via POLO-box domain) with the phosphorylated form of BUB1, CENPU and CDC25C. Interacts with isoform 3 of SGO1. Interacts with BORA, KIF2A and AURKA. Interacts with TOPORS and CYLD. Interacts with ECT2; the interaction is stimulated upon phosphorylation of ECT2 on 'Thr-444'. Interacts with PRC1. Interacts with KIF20A/MKLP2 (when phosphorylated), leading to the recruitment at the central spindle. Interacts (via POLO box domains) with PPP1R12A/MYPT1 (when previously phosphorylated by CDK1). Part of an astrin (SPAG5)-kinastrin (SKAP) complex containing KNSTRN, SPAG5, PLK1, DYNLL1 and SGO2. Interacts with BIRC6/bruce. Interacts with CDK1-phosphorylated FRY; this interaction occurs in mitotic cells, but not in interphase cells. FRY interaction facilitates AURKA-mediated PLK1 phosphorylation. Interacts with CDK1-phosphorylated DCTN6 during mitotic prometaphase; the interaction facilitates recruitment to kinetochores. Interacts with CEP68; the interaction phosphorylates CEP68. Interacts (via POLO-box domain) with DCTN1. Interacts with CEP20 in later G1, S, G2 and M phases of the cell cycle; this interaction recruits PLK1 to centrosomes, a step required for S phase progression. Interacts with HSF1; this interaction increases upon heat shock but does not modulate neither HSF1 homotrimerization nor DNA-binding activities. Interacts with HNRNPU; this interaction induces phosphorylation of HNRNPU in mitosis. Interacts (via its N-terminus) with RIOK2. Interacts with KLHL22. Interacts (via POLO box domains) with NEDD9/HEF1 (via C-terminus). Interacts (via RVxF motif) with FIRRM; regulates PLK1 kinase activity. Interacts with SKA3; the interaction promotes the stability of PLK1. Interacts with the MTMR3:MTMR4 heterooligomer; brings CEP55 and PLK1 together during early mitosis, regulating the phosphorylation of CEP55 by PLK1 and its recruitment to the midbody where it can mediate cell abscission. In terms of processing, catalytic activity is enhanced by phosphorylation of Thr-210. Phosphorylation at Thr-210 is first detected on centrosomes in the G2 phase of the cell cycle, peaks in prometaphase and gradually disappears from centrosomes during anaphase. Dephosphorylation at Thr-210 at centrosomes is probably mediated by protein phosphatase 1C (PP1C), via interaction with PPP1R12A/MYPT1. Autophosphorylation and phosphorylation of Ser-137 may not be significant for the activation of PLK1 during mitosis, but may enhance catalytic activity during recovery after DNA damage checkpoint. Phosphorylated in vitro by STK10. Ubiquitinated by the anaphase promoting complex/cyclosome (APC/C) in anaphase and following DNA damage, leading to its degradation by the proteasome. Ubiquitination is mediated via its interaction with FZR1/CDH1. Ubiquitination and subsequent degradation prevents entry into mitosis and is essential to maintain an efficient G2 DNA damage checkpoint. Monoubiquitination at Lys-492 by the BCR(KLHL22) ubiquitin ligase complex does not lead to degradation: it promotes PLK1 dissociation from phosphoreceptor proteins and subsequent removal from kinetochores, allowing silencing of the spindle assembly checkpoint (SAC) and chromosome segregation.

The protein resides in the nucleus. Its subcellular location is the chromosome. It localises to the centromere. The protein localises to the kinetochore. It is found in the cytoplasm. The protein resides in the cytoskeleton. Its subcellular location is the microtubule organizing center. It localises to the centrosome. The protein localises to the spindle. It is found in the midbody. The enzyme catalyses L-seryl-[protein] + ATP = O-phospho-L-seryl-[protein] + ADP + H(+). It catalyses the reaction L-threonyl-[protein] + ATP = O-phospho-L-threonyl-[protein] + ADP + H(+). Activated by phosphorylation of Thr-210 by AURKA; phosphorylation by AURKA is enhanced by BORA. Once activated, activity is stimulated by binding target proteins. Binding of target proteins has no effect on the non-activated kinase. Several inhibitors targeting PLKs are currently in development and are under investigation in a growing number of clinical trials, such as BI 2536, an ATP-competitive PLK1 inhibitor or BI 6727, a dihydropteridinone that specifically inhibits the catalytic activity of PLK1. Its function is as follows. Serine/threonine-protein kinase that performs several important functions throughout M phase of the cell cycle, including the regulation of centrosome maturation and spindle assembly, the removal of cohesins from chromosome arms, the inactivation of anaphase-promoting complex/cyclosome (APC/C) inhibitors, and the regulation of mitotic exit and cytokinesis. Polo-like kinase proteins act by binding and phosphorylating proteins that are already phosphorylated on a specific motif recognized by the POLO box domains. Phosphorylates BORA, BUB1B/BUBR1, CCNB1, CDC25C, CEP55, ECT2, ERCC6L, FBXO5/EMI1, FOXM1, KIF20A/MKLP2, CENPU, NEDD1, NINL, NPM1, NUDC, PKMYT1/MYT1, KIZ, PPP1R12A/MYPT1, PRC1, RACGAP1/CYK4, RHNO1, SGO1, STAG2/SA2, TEX14, TOPORS, p73/TP73, TPT1, WEE1 and HNRNPU. Plays a key role in centrosome functions and the assembly of bipolar spindles by phosphorylating KIZ, NEDD1 and NINL. NEDD1 phosphorylation promotes subsequent targeting of the gamma-tubulin ring complex (gTuRC) to the centrosome, an important step for spindle formation. Phosphorylation of NINL component of the centrosome leads to NINL dissociation from other centrosomal proteins. Involved in mitosis exit and cytokinesis by phosphorylating CEP55, ECT2, KIF20A/MKLP2, CENPU, PRC1 and RACGAP1. Recruited at the central spindle by phosphorylating and docking PRC1 and KIF20A/MKLP2; creates its own docking sites on PRC1 and KIF20A/MKLP2 by mediating phosphorylation of sites subsequently recognized by the POLO box domains. Phosphorylates RACGAP1, thereby creating a docking site for the Rho GTP exchange factor ECT2 that is essential for the cleavage furrow formation. Promotes the central spindle recruitment of ECT2. Plays a central role in G2/M transition of mitotic cell cycle by phosphorylating CCNB1, CDC25C, FOXM1, CENPU, PKMYT1/MYT1, PPP1R12A/MYPT1 and WEE1. Part of a regulatory circuit that promotes the activation of CDK1 by phosphorylating the positive regulator CDC25C and inhibiting the negative regulators WEE1 and PKMYT1/MYT1. Also acts by mediating phosphorylation of cyclin-B1 (CCNB1) on centrosomes in prophase. Phosphorylates FOXM1, a key mitotic transcription regulator, leading to enhance FOXM1 transcriptional activity. Involved in kinetochore functions and sister chromatid cohesion by phosphorylating BUB1B/BUBR1, FBXO5/EMI1 and STAG2/SA2. PLK1 is high on non-attached kinetochores suggesting a role of PLK1 in kinetochore attachment or in spindle assembly checkpoint (SAC) regulation. Required for kinetochore localization of BUB1B. Regulates the dissociation of cohesin from chromosomes by phosphorylating cohesin subunits such as STAG2/SA2. Phosphorylates SGO1: required for spindle pole localization of isoform 3 of SGO1 and plays a role in regulating its centriole cohesion function. Mediates phosphorylation of FBXO5/EMI1, a negative regulator of the APC/C complex during prophase, leading to FBXO5/EMI1 ubiquitination and degradation by the proteasome. Acts as a negative regulator of p53 family members: phosphorylates TOPORS, leading to inhibit the sumoylation of p53/TP53 and simultaneously enhance the ubiquitination and subsequent degradation of p53/TP53. Phosphorylates the transactivation domain of the transcription factor p73/TP73, leading to inhibit p73/TP73-mediated transcriptional activation and pro-apoptotic functions. Phosphorylates BORA, and thereby promotes the degradation of BORA. Contributes to the regulation of AURKA function. Also required for recovery after DNA damage checkpoint and entry into mitosis. Phosphorylates MISP, leading to stabilization of cortical and astral microtubule attachments required for proper spindle positioning. Together with MEIKIN, acts as a regulator of kinetochore function during meiosis I: required both for mono-orientation of kinetochores on sister chromosomes and protection of centromeric cohesin from separase-mediated cleavage. Phosphorylates CEP68 and is required for its degradation. Regulates nuclear envelope breakdown during prophase by phosphorylating DCTN1 resulting in its localization in the nuclear envelope. Phosphorylates the heat shock transcription factor HSF1, promoting HSF1 nuclear translocation upon heat shock. Phosphorylates HSF1 also in the early mitotic period; this phosphorylation regulates HSF1 localization to the spindle pole, the recruitment of the SCF(BTRC) ubiquitin ligase complex induicing HSF1 degradation, and hence mitotic progression. Regulates mitotic progression by phosphorylating RIOK2. Through the phosphorylation of DZIP1 regulates the localization during mitosis of the BBSome, a ciliary protein complex involved in cilium biogenesis. Regulates DNA repair during mitosis by mediating phosphorylation of POLQ and RHNO1, thereby promoting POLQ recruitment to DNA damage sites. Phosphorylates ATXN10 which may play a role in the regulation of cytokinesis and may stimulate the proteasome-mediated degradation of ATXN10. This is Serine/threonine-protein kinase PLK1 (Plk1) from Rattus norvegicus (Rat).